We begin with the raw amino-acid sequence, 128 residues long: Glycoprotein hormone alpha-2 (128 aa).

The first 20 residues, 1-20, serve as a signal peptide directing secretion; sequence MPMAPRVLLLCLLGLAVTEG. 4 disulfide bridges follow: Cys-30–Cys-88, Cys-47–Cys-102, Cys-56–Cys-118, and Cys-60–Cys-120. 2 N-linked (GlcNAc...) asparagine glycosylation sites follow: Asn-36 and Asn-80.

The protein belongs to the glycoprotein hormones subunit alpha family. In terms of assembly, heterodimer with GPHB5; this heterodimer interacts with thyroid-stimulating hormone receptor (TSHR), and hence stimulates cAMP production.

The protein localises to the secreted. In terms of biological role, functions as a heterodimeric glycoprotein hormone with GPHB5 able to bind and activate the thyroid-stimulating hormone receptor (TSHR), leading to increased cAMP production. Plays a central role in controlling thyroid cell metabolism. This is Glycoprotein hormone alpha-2 (Gpha2) from Mus musculus (Mouse).